The primary structure comprises 383 residues: 1-deoxy-D-xylulose 5-phosphate reductoisomerase (383 aa).

Residues T10, G11, S12, I13, G36, K37, N38, and N122 each coordinate NADPH. Residue K123 participates in 1-deoxy-D-xylulose 5-phosphate binding. E124 serves as a coordination point for NADPH. Mn(2+) is bound at residue D148. Positions 149, 150, 174, and 197 each coordinate 1-deoxy-D-xylulose 5-phosphate. E150 is a Mn(2+) binding site. Position 203 (G203) interacts with NADPH. 1-deoxy-D-xylulose 5-phosphate contacts are provided by S210, N215, K216, and E219. Residue E219 participates in Mn(2+) binding.

It belongs to the DXR family. The cofactor is Mg(2+). It depends on Mn(2+) as a cofactor.

It catalyses the reaction 2-C-methyl-D-erythritol 4-phosphate + NADP(+) = 1-deoxy-D-xylulose 5-phosphate + NADPH + H(+). It participates in isoprenoid biosynthesis; isopentenyl diphosphate biosynthesis via DXP pathway; isopentenyl diphosphate from 1-deoxy-D-xylulose 5-phosphate: step 1/6. Catalyzes the NADPH-dependent rearrangement and reduction of 1-deoxy-D-xylulose-5-phosphate (DXP) to 2-C-methyl-D-erythritol 4-phosphate (MEP). This is 1-deoxy-D-xylulose 5-phosphate reductoisomerase from Bacillus velezensis (strain DSM 23117 / BGSC 10A6 / LMG 26770 / FZB42) (Bacillus amyloliquefaciens subsp. plantarum).